The chain runs to 940 residues: Phagocyte signaling-impaired protein (940 aa).

Residues 77 to 110 (STTLHVMTLCYKETDQLDKICQIFTSASKQLPGN) form a TPR repeat.

The protein belongs to the MDM20/NAA25 family. Component of the N-terminal acetyltransferase B (NatB) complex.

The protein resides in the lysosome. Its function is as follows. Non-catalytic subunit of the NatB complex which catalyzes acetylation of the N-terminal methionine residues of proteins beginning with Met-Asp or Met-Glu. Has 2 roles in the larval immune response: required both for the phagocytic degradation of internalized bacteria and for the induction of Defensin in the fat body. Within the phagocytic blood cells, has a role in detection of infection and activation of the humoral immune response. The protein is Phagocyte signaling-impaired protein of Aedes aegypti (Yellowfever mosquito).